Here is a 116-residue protein sequence, read N- to C-terminus: Flagellar hook-basal body complex protein FliE (116 aa).

This sequence belongs to the FliE family.

It localises to the bacterial flagellum basal body. The polypeptide is Flagellar hook-basal body complex protein FliE (Rhizobium rhizogenes (strain K84 / ATCC BAA-868) (Agrobacterium radiobacter)).